We begin with the raw amino-acid sequence, 194 residues long: ATP-dependent Clp protease proteolytic subunit (194 aa).

The Nucleophile role is filled by serine 98. Histidine 123 is a catalytic residue.

Belongs to the peptidase S14 family. As to quaternary structure, fourteen ClpP subunits assemble into 2 heptameric rings which stack back to back to give a disk-like structure with a central cavity, resembling the structure of eukaryotic proteasomes.

It is found in the cytoplasm. It catalyses the reaction Hydrolysis of proteins to small peptides in the presence of ATP and magnesium. alpha-casein is the usual test substrate. In the absence of ATP, only oligopeptides shorter than five residues are hydrolyzed (such as succinyl-Leu-Tyr-|-NHMec, and Leu-Tyr-Leu-|-Tyr-Trp, in which cleavage of the -Tyr-|-Leu- and -Tyr-|-Trp bonds also occurs).. In terms of biological role, cleaves peptides in various proteins in a process that requires ATP hydrolysis. Has a chymotrypsin-like activity. Plays a major role in the degradation of misfolded proteins. This is ATP-dependent Clp protease proteolytic subunit from Clostridium botulinum (strain Hall / ATCC 3502 / NCTC 13319 / Type A).